The primary structure comprises 354 residues: Guanine nucleotide-binding protein G(t) subunit alpha-2 (354 aa).

The tract at residues 1–27 (MGSGASAEDKELAKRSKELEKKLQEDA) is disordered. Gly2 carries N-myristoyl glycine lipidation. Residues 7 to 27 (AEDKELAKRSKELEKKLQEDA) are compositionally biased toward basic and acidic residues. Positions 32-354 (KTVKLLLLGA…KENLKDCGLF (323 aa)) constitute a G-alpha domain. The segment at 35–48 (KLLLLGAGESGKST) is G1 motif. GTP contacts are provided by residues 40–47 (GAGESGKS), 175–181 (LRSRVKT), 200–204 (DVGGQ), 269–272 (NKKD), and Ala326. A Mg(2+)-binding site is contributed by Ser47. The G2 motif stretch occupies residues 173 to 181 (DVLRSRVKT). Arg178 carries the ADP-ribosylarginine; by cholera toxin modification. Residue Thr181 participates in Mg(2+) binding. The interval 196 to 205 (FRMFDVGGQR) is G3 motif. A G4 motif region spans residues 265-272 (VLFLNKKD). The segment at 324-329 (TCATDT) is G5 motif. Position 351 is an ADP-ribosylcysteine; by pertussis toxin (Cys351).

Belongs to the G-alpha family. G(i/o/t/z) subfamily. G proteins are composed of 3 units; alpha, beta and gamma. The alpha chain contains the guanine nucleotide binding site. Retinal rod outer segment.

The protein resides in the cell projection. Its subcellular location is the cilium. It localises to the photoreceptor outer segment. The protein localises to the photoreceptor inner segment. Functionally, guanine nucleotide-binding proteins (G proteins) are involved as modulators or transducers in various transmembrane signaling systems. Transducin is an amplifier and one of the transducers of a visual impulse that performs the coupling between rhodopsin and cGMP-phosphodiesterase. In Homo sapiens (Human), this protein is Guanine nucleotide-binding protein G(t) subunit alpha-2 (GNAT2).